A 259-amino-acid chain; its full sequence is Ribosomal RNA small subunit methyltransferase A (259 aa).

Positions 13, 15, 40, 61, 85, and 103 each coordinate S-adenosyl-L-methionine.

Belongs to the class I-like SAM-binding methyltransferase superfamily. rRNA adenine N(6)-methyltransferase family. RsmA subfamily.

Its subcellular location is the cytoplasm. The enzyme catalyses adenosine(1518)/adenosine(1519) in 16S rRNA + 4 S-adenosyl-L-methionine = N(6)-dimethyladenosine(1518)/N(6)-dimethyladenosine(1519) in 16S rRNA + 4 S-adenosyl-L-homocysteine + 4 H(+). Functionally, specifically dimethylates two adjacent adenosines (A1518 and A1519) in the loop of a conserved hairpin near the 3'-end of 16S rRNA in the 30S particle. May play a critical role in biogenesis of 30S subunits. This is Ribosomal RNA small subunit methyltransferase A from Neisseria meningitidis serogroup B (strain ATCC BAA-335 / MC58).